Consider the following 330-residue polypeptide: Flotillin-like protein FloA (330 aa).

A run of 2 helical transmembrane segments spans residues Ile3–Met23 and Leu26–Ala46.

The protein belongs to the flotillin-like FloA family. As to quaternary structure, homooligomerizes.

The protein resides in the cell membrane. It is found in the membrane raft. Found in functional membrane microdomains (FMM) that may be equivalent to eukaryotic membrane rafts. FMMs are highly dynamic and increase in number as cells age. Flotillins are thought to be important factors in membrane fluidity. This is Flotillin-like protein FloA from Sorangium cellulosum (strain So ce56) (Polyangium cellulosum (strain So ce56)).